Reading from the N-terminus, the 351-residue chain is Peptide chain release factor 1 (351 aa).

Gln229 carries the post-translational modification N5-methylglutamine. Residues 278–297 are disordered; the sequence is RVDDERSADRAAQVGSGDRS.

Belongs to the prokaryotic/mitochondrial release factor family. In terms of processing, methylated by PrmC. Methylation increases the termination efficiency of RF1.

The protein resides in the cytoplasm. In terms of biological role, peptide chain release factor 1 directs the termination of translation in response to the peptide chain termination codons UAG and UAA. The sequence is that of Peptide chain release factor 1 from Roseobacter denitrificans (strain ATCC 33942 / OCh 114) (Erythrobacter sp. (strain OCh 114)).